A 216-amino-acid polypeptide reads, in one-letter code: Imidazole glycerol phosphate synthase subunit HisH 1 (216 aa).

In terms of domain architecture, Glutamine amidotransferase type-1 spans 4 to 216 (CVLIVDAGLG…LQNFIALNPC (213 aa)). Cys-84 functions as the Nucleophile in the catalytic mechanism. Residues His-195 and Glu-197 contribute to the active site.

In terms of assembly, heterodimer of HisH and HisF.

The protein resides in the cytoplasm. The enzyme catalyses 5-[(5-phospho-1-deoxy-D-ribulos-1-ylimino)methylamino]-1-(5-phospho-beta-D-ribosyl)imidazole-4-carboxamide + L-glutamine = D-erythro-1-(imidazol-4-yl)glycerol 3-phosphate + 5-amino-1-(5-phospho-beta-D-ribosyl)imidazole-4-carboxamide + L-glutamate + H(+). The catalysed reaction is L-glutamine + H2O = L-glutamate + NH4(+). Its pathway is amino-acid biosynthesis; L-histidine biosynthesis; L-histidine from 5-phospho-alpha-D-ribose 1-diphosphate: step 5/9. In terms of biological role, IGPS catalyzes the conversion of PRFAR and glutamine to IGP, AICAR and glutamate. The HisH subunit provides the glutamine amidotransferase activity that produces the ammonia necessary to HisF for the synthesis of IGP and AICAR. The protein is Imidazole glycerol phosphate synthase subunit HisH 1 (hisH1) of Prochlorococcus marinus (strain MIT 9313).